The chain runs to 812 residues: Hyaluronate lyase HylB (812 aa).

Residues Met1 to Ala32 constitute a signal peptide (tat-type signal). Catalysis depends on residues Asn222, His272, and Tyr281.

Belongs to the polysaccharide lyase 8 family. Predicted to be exported by the Tat system. The position of the signal peptide cleavage has been experimentally proven.

It localises to the secreted. The catalysed reaction is [hyaluronan](n) = n 3-(4-deoxy-beta-D-gluc-4-enuronosyl)-N-acetyl-D-glucosamine + H2O. Degrades hyaluronic acid (HA) exclusively into HA disaccharides (HA-2). Produced HA-2s confer anti-inflammatory properties leading to reduced immunopathology in the mouse model of acne. In Cutibacterium acnes (Propionibacterium acnes), this protein is Hyaluronate lyase HylB.